A 615-amino-acid chain; its full sequence is Dihydroxy-acid dehydratase (615 aa).

Mg(2+) is bound at residue Asp-81. [2Fe-2S] cluster is bound at residue Cys-122. Mg(2+) contacts are provided by Asp-123 and Lys-124. Lys-124 is subject to N6-carboxylysine. Residue Cys-195 participates in [2Fe-2S] cluster binding. Residue Glu-491 participates in Mg(2+) binding. Ser-517 (proton acceptor) is an active-site residue.

This sequence belongs to the IlvD/Edd family. In terms of assembly, homodimer. [2Fe-2S] cluster serves as cofactor. Requires Mg(2+) as cofactor.

The enzyme catalyses (2R)-2,3-dihydroxy-3-methylbutanoate = 3-methyl-2-oxobutanoate + H2O. It catalyses the reaction (2R,3R)-2,3-dihydroxy-3-methylpentanoate = (S)-3-methyl-2-oxopentanoate + H2O. It participates in amino-acid biosynthesis; L-isoleucine biosynthesis; L-isoleucine from 2-oxobutanoate: step 3/4. It functions in the pathway amino-acid biosynthesis; L-valine biosynthesis; L-valine from pyruvate: step 3/4. Functionally, functions in the biosynthesis of branched-chain amino acids. Catalyzes the dehydration of (2R,3R)-2,3-dihydroxy-3-methylpentanoate (2,3-dihydroxy-3-methylvalerate) into 2-oxo-3-methylpentanoate (2-oxo-3-methylvalerate) and of (2R)-2,3-dihydroxy-3-methylbutanoate (2,3-dihydroxyisovalerate) into 2-oxo-3-methylbutanoate (2-oxoisovalerate), the penultimate precursor to L-isoleucine and L-valine, respectively. In Shewanella pealeana (strain ATCC 700345 / ANG-SQ1), this protein is Dihydroxy-acid dehydratase.